A 143-amino-acid chain; its full sequence is 3-dehydroquinate dehydratase (143 aa).

Tyrosine 21 functions as the Proton acceptor in the catalytic mechanism. Residues asparagine 73, histidine 79, and aspartate 86 each coordinate substrate. Residue histidine 99 is the Proton donor of the active site. Residues 100-101 (IS) and arginine 110 contribute to the substrate site.

It belongs to the type-II 3-dehydroquinase family. As to quaternary structure, homododecamer.

It catalyses the reaction 3-dehydroquinate = 3-dehydroshikimate + H2O. It participates in metabolic intermediate biosynthesis; chorismate biosynthesis; chorismate from D-erythrose 4-phosphate and phosphoenolpyruvate: step 3/7. Catalyzes a trans-dehydration via an enolate intermediate. The protein is 3-dehydroquinate dehydratase of Deinococcus radiodurans (strain ATCC 13939 / DSM 20539 / JCM 16871 / CCUG 27074 / LMG 4051 / NBRC 15346 / NCIMB 9279 / VKM B-1422 / R1).